We begin with the raw amino-acid sequence, 666 residues long: MRAVRAETPARELFRDAAFPASDSSLFYNLSTPLAQFREDITWRRPQEICATPQLFPDNPWEGQVKQGLLGDCWFLCACAALQKSQHLLDQVFPPGQPGWSDQKYQGFFTCRIWQFGHWEEVTIDDRLPCLAGRLCFSRCQREDVFWLPLLEKAYAKVHGSYEHLWAGQVADALVDLTGSLAERWSLKDVTKASGQQDRPSGGEHRTCRQLLHLKDRCLISCSVLSPRAGARELGEFHAFIISDLQELRSQTGQGILLLRIHNPWGRRCWQGLWREGGEGWNQVEPAKESELLAQLQEGEFWVEEEEFLREFDEVTIGYPVTEAGHLQSLHTERVLCHTRTLPGAWVTGQSAGGCRNNSCFPCNPKFWLRLLEPSEVCVAVLQRPRRRLVGQTRALAGASPAPVNLPGKDYQAVGLHIWKVEKRKISLPRVLSAPPVAGTACHAYDREIHLRCELSPGYYLAVPSTFLKDVPGQFLLRVFSTGKISLSAVRLATKGASPGTALPAGEWETVQLQGCWRAGQTAGGSRNFASYPCNPCLPFSVPEGAGPRYIRITLQQHCRLSDSQLHPIGFHVFQVPADGENQDACSLLLQEPLLSCVPHRYAQEVSRLCLLSVGNYRIVPSTYLPDTEGTFTVTIATRIDRQSIHSQEMLGQLLQEVSFMAVMKA.

One can recognise a Calpain catalytic domain in the interval 13–321 (LFRDAAFPAS…FDEVTIGYPV (309 aa)). Catalysis depends on residues Cys-73, His-238, and Asn-263. 2 domain III regions span residues 322-488 (TEAG…ISLS) and 507-648 (EWET…IHSQ).

It belongs to the peptidase C2 family.

Its function is as follows. Calcium-regulated non-lysosomal thiol-protease which catalyzes limited proteolysis of substrates involved in cytoskeletal remodeling and signal transduction. May play a role in insulin-stimulated glucose uptake. This Mus musculus (Mouse) protein is Calpain-10 (Capn10).